We begin with the raw amino-acid sequence, 265 residues long: Eukaryotic translation initiation factor 3 subunit J (265 aa).

Composition is skewed to acidic residues over residues 1-12 (MAPERWDDEEDS) and 26-44 (DEEEDEVLDSWDAAEDSEV). Disordered stretches follow at residues 1-113 (MAPE…DADL) and 212-265 (TMSN…DDFM). Basic and acidic residues-rich tracts occupy residues 45-65 (EREKAAKAAEAKAKADAEAAA) and 73-86 (RIQEHKEERKKKAE). A coiled-coil region spans residues 61–95 (AEAAAKKKSKSQRIQEHKEERKKKAEEEDSDSEEE). Positions 87–97 (EEDSDSEEEDD) are enriched in acidic residues. Positions 216–228 (EKMREERAADKGS) are enriched in basic and acidic residues. A compositionally biased stretch (acidic residues) spans 251–265 (DYDNGDDGLGDDDFM).

It belongs to the eIF-3 subunit J family. In terms of assembly, component of the eukaryotic translation initiation factor 3 (eIF-3) complex.

It localises to the cytoplasm. Functionally, component of the eukaryotic translation initiation factor 3 (eIF-3) complex, which is involved in protein synthesis of a specialized repertoire of mRNAs and, together with other initiation factors, stimulates binding of mRNA and methionyl-tRNAi to the 40S ribosome. The eIF-3 complex specifically targets and initiates translation of a subset of mRNAs involved in cell proliferation. In Aspergillus oryzae (strain ATCC 42149 / RIB 40) (Yellow koji mold), this protein is Eukaryotic translation initiation factor 3 subunit J (hcr1).